The primary structure comprises 232 residues: Purine nucleoside phosphorylase DeoD-type (232 aa).

H4 is an a purine D-ribonucleoside binding site. Phosphate contacts are provided by residues G20, R24, R43, and 87–90 (RIGT). Residues 179 to 181 (EME) and 203 to 204 (SD) each bind a purine D-ribonucleoside. D204 serves as the catalytic Proton donor.

It belongs to the PNP/UDP phosphorylase family. Homohexamer; trimer of homodimers.

It catalyses the reaction a purine D-ribonucleoside + phosphate = a purine nucleobase + alpha-D-ribose 1-phosphate. The catalysed reaction is a purine 2'-deoxy-D-ribonucleoside + phosphate = a purine nucleobase + 2-deoxy-alpha-D-ribose 1-phosphate. Its function is as follows. Catalyzes the reversible phosphorolytic breakdown of the N-glycosidic bond in the beta-(deoxy)ribonucleoside molecules, with the formation of the corresponding free purine bases and pentose-1-phosphate. The sequence is that of Purine nucleoside phosphorylase DeoD-type from Caldanaerobacter subterraneus subsp. tengcongensis (strain DSM 15242 / JCM 11007 / NBRC 100824 / MB4) (Thermoanaerobacter tengcongensis).